Reading from the N-terminus, the 155-residue chain is 3-hydroxyacyl-[acyl-carrier-protein] dehydratase FabZ (155 aa).

Residue His59 is part of the active site.

It belongs to the thioester dehydratase family. FabZ subfamily.

It localises to the cytoplasm. The catalysed reaction is a (3R)-hydroxyacyl-[ACP] = a (2E)-enoyl-[ACP] + H2O. Involved in unsaturated fatty acids biosynthesis. Catalyzes the dehydration of short chain beta-hydroxyacyl-ACPs and long chain saturated and unsaturated beta-hydroxyacyl-ACPs. The polypeptide is 3-hydroxyacyl-[acyl-carrier-protein] dehydratase FabZ (Bartonella quintana (strain Toulouse) (Rochalimaea quintana)).